An 86-amino-acid chain; its full sequence is EMBRYO SURROUNDING FACTOR 1-like protein 2 (86 aa).

The signal sequence occupies residues 1–21; the sequence is MKSHIAIICIIMLSFFSMHEY. 4 cysteine pairs are disulfide-bonded: C39–C54, C44–C82, C52–C78, and C55–C65.

It belongs to the MEG family.

This chain is EMBRYO SURROUNDING FACTOR 1-like protein 2 (ESFL2), found in Arabidopsis thaliana (Mouse-ear cress).